Consider the following 300-residue polypeptide: N-acetylmuramic acid 6-phosphate etherase (300 aa).

One can recognise an SIS domain in the interval valine 57–lysine 220. Glutamate 85 functions as the Proton donor in the catalytic mechanism. Glutamate 116 is a catalytic residue.

Belongs to the GCKR-like family. MurNAc-6-P etherase subfamily. In terms of assembly, homodimer.

It catalyses the reaction N-acetyl-D-muramate 6-phosphate + H2O = N-acetyl-D-glucosamine 6-phosphate + (R)-lactate. It functions in the pathway amino-sugar metabolism; N-acetylmuramate degradation. The protein operates within amino-sugar metabolism; 1,6-anhydro-N-acetylmuramate degradation. It participates in cell wall biogenesis; peptidoglycan recycling. In terms of biological role, specifically catalyzes the cleavage of the D-lactyl ether substituent of MurNAc 6-phosphate, producing GlcNAc 6-phosphate and D-lactate. Together with AnmK, is also required for the utilization of anhydro-N-acetylmuramic acid (anhMurNAc) either imported from the medium or derived from its own cell wall murein, and thus plays a role in cell wall recycling. This chain is N-acetylmuramic acid 6-phosphate etherase, found in Edwardsiella ictaluri (strain 93-146).